The following is a 114-amino-acid chain: Small ribosomal subunit protein bS16 (114 aa).

The tract at residues 87–114 (AFREQPVQSAPKKKAQERAAERAKAAEA) is disordered. Residues 100 to 114 (KAQERAAERAKAAEA) show a composition bias toward basic and acidic residues.

This sequence belongs to the bacterial ribosomal protein bS16 family.

This Acidiphilium cryptum (strain JF-5) protein is Small ribosomal subunit protein bS16.